Consider the following 290-residue polypeptide: Acetyl-coenzyme A carboxylase carboxyl transferase subunit beta (290 aa).

Residues 27-290 enclose the CoA carboxyltransferase N-terminal domain; it reads LWVKCPSCES…LQKQPADAVA (264 aa). 4 residues coordinate Zn(2+): C31, C34, C50, and C53. A C4-type zinc finger spans residues 31-53; the sequence is CPSCESTLYRTDVEANLHVCPKC.

It belongs to the AccD/PCCB family. As to quaternary structure, acetyl-CoA carboxylase is a heterohexamer composed of biotin carboxyl carrier protein (AccB), biotin carboxylase (AccC) and two subunits each of ACCase subunit alpha (AccA) and ACCase subunit beta (AccD). The cofactor is Zn(2+).

It localises to the cytoplasm. The catalysed reaction is N(6)-carboxybiotinyl-L-lysyl-[protein] + acetyl-CoA = N(6)-biotinyl-L-lysyl-[protein] + malonyl-CoA. The protein operates within lipid metabolism; malonyl-CoA biosynthesis; malonyl-CoA from acetyl-CoA: step 1/1. In terms of biological role, component of the acetyl coenzyme A carboxylase (ACC) complex. Biotin carboxylase (BC) catalyzes the carboxylation of biotin on its carrier protein (BCCP) and then the CO(2) group is transferred by the transcarboxylase to acetyl-CoA to form malonyl-CoA. The chain is Acetyl-coenzyme A carboxylase carboxyl transferase subunit beta from Cupriavidus taiwanensis (strain DSM 17343 / BCRC 17206 / CCUG 44338 / CIP 107171 / LMG 19424 / R1) (Ralstonia taiwanensis (strain LMG 19424)).